The primary structure comprises 502 residues: Glycerol kinase (502 aa).

ADP is bound at residue T14. T14, T15, and S16 together coordinate ATP. Position 14 (T14) interacts with sn-glycerol 3-phosphate. R18 is an ADP binding site. Residues R84, E85, Y136, and D246 each coordinate sn-glycerol 3-phosphate. 5 residues coordinate glycerol: R84, E85, Y136, D246, and Q247. Positions 268 and 311 each coordinate ADP. ATP contacts are provided by T268, G311, Q315, and G412. Residues G412 and N416 each coordinate ADP.

It belongs to the FGGY kinase family. In terms of assembly, homotetramer and homodimer (in equilibrium). Heterodimer with EIIA-Glc. Binds 1 zinc ion per glycerol kinase EIIA-Glc dimer. The zinc ion is important for dimerization.

It catalyses the reaction glycerol + ATP = sn-glycerol 3-phosphate + ADP + H(+). It functions in the pathway polyol metabolism; glycerol degradation via glycerol kinase pathway; sn-glycerol 3-phosphate from glycerol: step 1/1. With respect to regulation, activity of this regulatory enzyme is affected by several metabolites. Allosterically and non-competitively inhibited by fructose 1,6-bisphosphate (FBP) and unphosphorylated phosphocarrier protein EIIA-Glc (III-Glc), an integral component of the bacterial phosphotransferase (PTS) system. Key enzyme in the regulation of glycerol uptake and metabolism. Catalyzes the phosphorylation of glycerol to yield sn-glycerol 3-phosphate. This Citrobacter koseri (strain ATCC BAA-895 / CDC 4225-83 / SGSC4696) protein is Glycerol kinase.